We begin with the raw amino-acid sequence, 343 residues long: Dual-specificity RNA methyltransferase RlmN (343 aa).

The Proton acceptor role is filled by Glu-92. The Radical SAM core domain occupies Asp-98–Asp-325. Cys-105 and Cys-330 are disulfide-bonded. Residues Cys-112, Cys-116, and Cys-119 each coordinate [4Fe-4S] cluster. Residues Gly-157–Glu-158, Ser-189, Ser-211–Asn-213, and Asn-287 each bind S-adenosyl-L-methionine. Cys-330 serves as the catalytic S-methylcysteine intermediate.

Belongs to the radical SAM superfamily. RlmN family. Requires [4Fe-4S] cluster as cofactor.

The protein resides in the cytoplasm. It carries out the reaction adenosine(2503) in 23S rRNA + 2 reduced [2Fe-2S]-[ferredoxin] + 2 S-adenosyl-L-methionine = 2-methyladenosine(2503) in 23S rRNA + 5'-deoxyadenosine + L-methionine + 2 oxidized [2Fe-2S]-[ferredoxin] + S-adenosyl-L-homocysteine. It catalyses the reaction adenosine(37) in tRNA + 2 reduced [2Fe-2S]-[ferredoxin] + 2 S-adenosyl-L-methionine = 2-methyladenosine(37) in tRNA + 5'-deoxyadenosine + L-methionine + 2 oxidized [2Fe-2S]-[ferredoxin] + S-adenosyl-L-homocysteine. In terms of biological role, specifically methylates position 2 of adenine 2503 in 23S rRNA and position 2 of adenine 37 in tRNAs. m2A2503 modification seems to play a crucial role in the proofreading step occurring at the peptidyl transferase center and thus would serve to optimize ribosomal fidelity. This Geotalea uraniireducens (strain Rf4) (Geobacter uraniireducens) protein is Dual-specificity RNA methyltransferase RlmN.